The sequence spans 117 residues: Large ribosomal subunit protein bL20 (117 aa).

It belongs to the bacterial ribosomal protein bL20 family.

Functionally, binds directly to 23S ribosomal RNA and is necessary for the in vitro assembly process of the 50S ribosomal subunit. It is not involved in the protein synthesizing functions of that subunit. This chain is Large ribosomal subunit protein bL20, found in Actinobacillus pleuropneumoniae serotype 7 (strain AP76).